Consider the following 390-residue polypeptide: Ketoisovalerate reductase BEA2 (390 aa).

NADP(+) is bound at residue 70–75; that stretch reads GPGNIG. Catalysis depends on Lys285, which acts as the Proton donor. Substrate contacts are provided by Asn289 and Asn293.

It belongs to the ketopantoate reductase family.

The enzyme catalyses (R)-2-hydroxy-3-methylbutanoate + NADP(+) = 3-methyl-2-oxobutanoate + NADPH + H(+). With respect to regulation, the reductase activity is increased by Mg(2+) (195%), Ca(2+) (169%) and slightly increased by K(+) (123%). The reduction activity is inhibited by Fe(2+) and Co(2+), and almost totally inhibited by Cu(2+), Mn(2+), Zn(2+) and Fe(3+) (from 3% to 9% residual activity respectively). The chelating agent EDTA had little effect, suggesting Mg(2+) and Ca(2+) are not determining factors, though they could promote the reductase enzyme activity. Ketoisovalerate reductase; part of the gene cluster that mediates the biosynthesis of beauvericin (BEA), a non-ribosomal cyclic hexadepsipeptide that shows antibiotic, antifungal, insecticidal, and cancer cell antiproliferative and antihaptotactic activity. Ketoisovalerate reductase BEA2 catalyzes the NADPH-specific reduction of ketoisovaleric acid to hydroxyisovalerate, a precursor for beauvericin biosynthesis. The nonribosomal cyclodepsipeptide synthetase BEA1 then catalyzes the formation of beauvericin via condensation and cyclization of 3 dipeptidol monomers, each composed of one unit of hydroxyisovalerate and one unit of N-methyl-phenylalanine. This chain is Ketoisovalerate reductase BEA2, found in Gibberella intermedia (Bulb rot disease fungus).